Consider the following 294-residue polypeptide: uncharacterized protein (294 aa).

The disordered stretch occupies residues 259-294 (LNAPTPIPPPITSHAGQEEALKPQRASKGKKAKARK). Residues 283–294 (RASKGKKAKARK) are compositionally biased toward basic residues.

This is an uncharacterized protein from Homo sapiens (Human).